An 89-amino-acid polypeptide reads, in one-letter code: UPF0213 protein HQ_3675A (89 aa).

The 76-residue stretch at 3-78 (DYHYVYIVEC…KSYTREKKQQ (76 aa)) folds into the GIY-YIG domain.

It belongs to the UPF0213 family.

This chain is UPF0213 protein HQ_3675A, found in Haloquadratum walsbyi (strain DSM 16790 / HBSQ001).